The following is a 388-amino-acid chain: Lipid-A-disaccharide synthase (388 aa).

This sequence belongs to the LpxB family.

The enzyme catalyses a lipid X + a UDP-2-N,3-O-bis[(3R)-3-hydroxyacyl]-alpha-D-glucosamine = a lipid A disaccharide + UDP + H(+). It participates in bacterial outer membrane biogenesis; LPS lipid A biosynthesis. Functionally, condensation of UDP-2,3-diacylglucosamine and 2,3-diacylglucosamine-1-phosphate to form lipid A disaccharide, a precursor of lipid A, a phosphorylated glycolipid that anchors the lipopolysaccharide to the outer membrane of the cell. This chain is Lipid-A-disaccharide synthase, found in Burkholderia thailandensis (strain ATCC 700388 / DSM 13276 / CCUG 48851 / CIP 106301 / E264).